Consider the following 307-residue polypeptide: tRNA pseudouridine synthase B (307 aa).

Catalysis depends on Asp38, which acts as the Nucleophile.

The protein belongs to the pseudouridine synthase TruB family. Type 1 subfamily.

It catalyses the reaction uridine(55) in tRNA = pseudouridine(55) in tRNA. In terms of biological role, responsible for synthesis of pseudouridine from uracil-55 in the psi GC loop of transfer RNAs. The protein is tRNA pseudouridine synthase B of Bacillus cereus (strain ATCC 14579 / DSM 31 / CCUG 7414 / JCM 2152 / NBRC 15305 / NCIMB 9373 / NCTC 2599 / NRRL B-3711).